The following is a 142-amino-acid chain: uncharacterized protein (142 aa).

A run of 3 helical transmembrane segments spans residues 3-23 (LIFIAKMLQYSFLPFSPFNLL), 30-50 (SVSWFITYSVIVSIWGFAVWI), and 91-111 (FFLLYLFLTASNLIVQLAYFS).

The protein localises to the membrane. This is an uncharacterized protein from Saccharomyces cerevisiae (strain ATCC 204508 / S288c) (Baker's yeast).